The following is a 417-amino-acid chain: Gamma-glutamyl phosphate reductase (417 aa).

It belongs to the gamma-glutamyl phosphate reductase family.

It localises to the cytoplasm. The enzyme catalyses L-glutamate 5-semialdehyde + phosphate + NADP(+) = L-glutamyl 5-phosphate + NADPH + H(+). It participates in amino-acid biosynthesis; L-proline biosynthesis; L-glutamate 5-semialdehyde from L-glutamate: step 2/2. Catalyzes the NADPH-dependent reduction of L-glutamate 5-phosphate into L-glutamate 5-semialdehyde and phosphate. The product spontaneously undergoes cyclization to form 1-pyrroline-5-carboxylate. This chain is Gamma-glutamyl phosphate reductase, found in Enterococcus faecalis (strain ATCC 700802 / V583).